Reading from the N-terminus, the 379-residue chain is tRNA-specific 2-thiouridylase MnmA (379 aa).

Residues Gly-16 to Ser-23 and Met-42 contribute to the ATP site. An interaction with target base in tRNA region spans residues Asn-102–Asp-104. The active-site Nucleophile is the Cys-107. Cys-107 and Cys-204 are disulfide-bonded. Position 131 (Gly-131) interacts with ATP. The interaction with tRNA stretch occupies residues Lys-154 to Gln-156. Cys-204 (cysteine persulfide intermediate) is an active-site residue. Residues Arg-316–Tyr-317 form an interaction with tRNA region.

Belongs to the MnmA/TRMU family.

Its subcellular location is the cytoplasm. The enzyme catalyses S-sulfanyl-L-cysteinyl-[protein] + uridine(34) in tRNA + AH2 + ATP = 2-thiouridine(34) in tRNA + L-cysteinyl-[protein] + A + AMP + diphosphate + H(+). Functionally, catalyzes the 2-thiolation of uridine at the wobble position (U34) of tRNA, leading to the formation of s(2)U34. This chain is tRNA-specific 2-thiouridylase MnmA, found in Hydrogenovibrio crunogenus (strain DSM 25203 / XCL-2) (Thiomicrospira crunogena).